A 230-amino-acid polypeptide reads, in one-letter code: Probable septum site-determining protein MinC (230 aa).

The protein belongs to the MinC family. In terms of assembly, interacts with MinD and FtsZ.

Cell division inhibitor that blocks the formation of polar Z ring septums. Rapidly oscillates between the poles of the cell to destabilize FtsZ filaments that have formed before they mature into polar Z rings. Prevents FtsZ polymerization. The polypeptide is Probable septum site-determining protein MinC (Erwinia tasmaniensis (strain DSM 17950 / CFBP 7177 / CIP 109463 / NCPPB 4357 / Et1/99)).